The following is a 472-amino-acid chain: Relaxin-3 receptor 1 (472 aa).

Topologically, residues 1–81 (MQVASATPAA…ESTDTEARVR (81 aa)) are extracellular. N36 and N40 each carry an N-linked (GlcNAc...) asparagine glycan. Residues 82-102 (ILISAVYWVVCALGLAGNLLV) traverse the membrane as a helical segment. Topologically, residues 103 to 119 (LYLMKSKQGWRKSSINL) are cytoplasmic. A helical transmembrane segment spans residues 120–140 (FVTNLALTDFQFVLTLPFWAV). Residues 141-156 (ENALDFKWPFGKAMCK) are Extracellular-facing. C155 and C247 are oxidised to a cystine. The chain crosses the membrane as a helical span at residues 157–177 (IVSMVTSMNMYASVFFLTAMS). At 178–215 (VARYHSVASALKSHRTRGRGRGDCCGQSLRESCCFSAK) the chain is on the cytoplasmic side. Residues 216-236 (VLCGLIWASAALASLPNAIFS) form a helical membrane-spanning segment. Over 237–270 (TTIRVLGEELCLMHFPDKLLGWDRQFWLGLYHLQ) the chain is Extracellular. A helical transmembrane segment spans residues 271-291 (KVLLGFLLPLSIISLCYLLLV). The Cytoplasmic portion of the chain corresponds to 292–298 (RFISDRR). The helical transmembrane segment at 299 to 319 (VVGTTDAVGAAAAPGGGLSTA) threads the bilayer. Topologically, residues 320 to 332 (SARRRSKVTKSVT) are extracellular. Residues 333 to 353 (IVVLSFFLCWLPNQALTTWSI) traverse the membrane as a helical segment. The Cytoplasmic segment spans residues 354-472 (LIKFNAVPFS…YDLLPSSSAY (119 aa)).

This sequence belongs to the G-protein coupled receptor 1 family.

The protein resides in the cell membrane. Functionally, receptor for RNL3/relaxin-3. Binding of the ligand inhibit cAMP accumulation. This Mus musculus (Mouse) protein is Relaxin-3 receptor 1 (Rxfp3).